The sequence spans 83 residues: Small ribosomal subunit protein bS16 (83 aa).

This sequence belongs to the bacterial ribosomal protein bS16 family.

In Pseudomonas fluorescens (strain Pf0-1), this protein is Small ribosomal subunit protein bS16.